A 166-amino-acid polypeptide reads, in one-letter code: Large ribosomal subunit protein uL10 (166 aa).

This sequence belongs to the universal ribosomal protein uL10 family. In terms of assembly, part of the ribosomal stalk of the 50S ribosomal subunit. The N-terminus interacts with L11 and the large rRNA to form the base of the stalk. The C-terminus forms an elongated spine to which L12 dimers bind in a sequential fashion forming a multimeric L10(L12)X complex.

In terms of biological role, forms part of the ribosomal stalk, playing a central role in the interaction of the ribosome with GTP-bound translation factors. This Pseudomonas entomophila (strain L48) protein is Large ribosomal subunit protein uL10.